A 546-amino-acid polypeptide reads, in one-letter code: Probable lysosomal cobalamin transporter (546 aa).

The next 4 membrane-spanning stretches (helical) occupy residues leucine 8 to phenylalanine 28, isoleucine 48 to valine 68, isoleucine 102 to phenylalanine 122, and tyrosine 141 to leucine 161. Residue asparagine 167 is glycosylated (N-linked (GlcNAc...) asparagine). The next 4 helical transmembrane spans lie at threonine 189–tyrosine 209, methionine 304–threonine 324, isoleucine 352–valine 372, and alanine 407–phenylalanine 427. 3 N-linked (GlcNAc...) asparagine glycosylation sites follow: asparagine 444, asparagine 452, and asparagine 459. Residues valine 495–threonine 515 form a helical membrane-spanning segment.

The protein belongs to the LIMR family. LMBRD1 subfamily.

It localises to the lysosome membrane. Probable lysosomal cobalamin transporter. Required to export cobalamin from lysosomes allowing its conversion to cofactors. This is Probable lysosomal cobalamin transporter from Nematostella vectensis (Starlet sea anemone).